A 549-amino-acid polypeptide reads, in one-letter code: Undecaprenyl phosphate-alpha-4-amino-4-deoxy-L-arabinose arabinosyl transferase (549 aa).

The next 12 helical transmembrane spans lie at 9–29 (LLLIAFGLFYLVPLSNHGLWI), 80–100 (LFGVRIASVVATALSVLLAYL), 112–132 (SLACALLYASFGLIAGQSGYA), 136–156 (PQFTFWVNLSLVALWHALDAG), 176–196 (FLTKGFLAWLLPVLVALPYML), 204–224 (LLGYGALAVLAALLVCLPWAL), 256–276 (PWWFYLPLLAVACLPWSGLLP), 288–308 (QAPVVFLALWLLLPLAFFSLS), 312–332 (LPTYIMPCLLPLALLMGHALV), 346–366 (NGLLNLGLALLALAALAYLQL), 376–396 (FELFLVLLVIGAWAAAGLAQW), and 402–422 (AWAAPLLASWVLIALLPAAMP).

Belongs to the glycosyltransferase 83 family.

The protein resides in the cell inner membrane. The catalysed reaction is 4-amino-4-deoxy-alpha-L-arabinopyranosyl di-trans,octa-cis-undecaprenyl phosphate + lipid IVA = lipid IIA + di-trans,octa-cis-undecaprenyl phosphate.. Its pathway is lipopolysaccharide metabolism; 4-amino-4-deoxy-beta-L-arabinose-lipid A biosynthesis. Its function is as follows. Catalyzes the transfer of the L-Ara4N moiety of the glycolipid undecaprenyl phosphate-alpha-L-Ara4N to lipid A. The modified arabinose is attached to lipid A and is required for resistance to polymyxin and cationic antimicrobial peptides. This chain is Undecaprenyl phosphate-alpha-4-amino-4-deoxy-L-arabinose arabinosyl transferase, found in Pseudomonas aeruginosa (strain ATCC 15692 / DSM 22644 / CIP 104116 / JCM 14847 / LMG 12228 / 1C / PRS 101 / PAO1).